A 360-amino-acid chain; its full sequence is Abhydrolase domain-containing protein lid-1 (360 aa).

In terms of domain architecture, AB hydrolase-1 spans 73–203 (AIVFIPGLGA…MSFLGGVAGY (131 aa)).

Belongs to the peptidase S33 family. ABHD4/ABHD5 subfamily. As to quaternary structure, interacts with atgl-1.

It localises to the lipid droplet. Its function is as follows. Acts coordinately with atgl-1 within the lipolytic cascade to distribute stored energy to tissues during nutritional deprivation. This is Abhydrolase domain-containing protein lid-1 from Caenorhabditis elegans.